A 263-amino-acid polypeptide reads, in one-letter code: GTP cyclohydrolase FolE2 (263 aa).

The protein belongs to the GTP cyclohydrolase IV family.

The enzyme catalyses GTP + H2O = 7,8-dihydroneopterin 3'-triphosphate + formate + H(+). It functions in the pathway cofactor biosynthesis; 7,8-dihydroneopterin triphosphate biosynthesis; 7,8-dihydroneopterin triphosphate from GTP: step 1/1. Its function is as follows. Converts GTP to 7,8-dihydroneopterin triphosphate. This is GTP cyclohydrolase FolE2 from Nitrosospira multiformis (strain ATCC 25196 / NCIMB 11849 / C 71).